We begin with the raw amino-acid sequence, 792 residues long: Endonuclease MutS2 (792 aa).

334–341 (GPNTGGKT) is a binding site for ATP. Residues 717 to 792 (IDLRGMMLSE…ENGVTVVELK (76 aa)) form the Smr domain.

The protein belongs to the DNA mismatch repair MutS family. MutS2 subfamily. Homodimer. Binds to stalled ribosomes, contacting rRNA.

In terms of biological role, endonuclease that is involved in the suppression of homologous recombination and thus may have a key role in the control of bacterial genetic diversity. Its function is as follows. Acts as a ribosome collision sensor, splitting the ribosome into its 2 subunits. Detects stalled/collided 70S ribosomes which it binds and splits by an ATP-hydrolysis driven conformational change. Acts upstream of the ribosome quality control system (RQC), a ribosome-associated complex that mediates the extraction of incompletely synthesized nascent chains from stalled ribosomes and their subsequent degradation. Probably generates substrates for RQC. This Ruminiclostridium cellulolyticum (strain ATCC 35319 / DSM 5812 / JCM 6584 / H10) (Clostridium cellulolyticum) protein is Endonuclease MutS2.